The sequence spans 268 residues: Nuclear protein UL4 homolog (268 aa).

Belongs to the alphaherpesvirinae HHV-1 UL4 family.

The protein resides in the host nucleus. The chain is Nuclear protein UL4 homolog (MDV016) from Gallid herpesvirus 2 (strain Chicken/Md5/ATCC VR-987) (GaHV-2).